The following is a 189-amino-acid chain: Potassium-transporting ATPase KdpC subunit (189 aa).

A helical membrane pass occupies residues 6 to 26 (PAIMMVLVFTIICGGIYPAVV).

The protein belongs to the KdpC family. In terms of assembly, the system is composed of three essential subunits: KdpA, KdpB and KdpC.

The protein localises to the cell inner membrane. In terms of biological role, part of the high-affinity ATP-driven potassium transport (or Kdp) system, which catalyzes the hydrolysis of ATP coupled with the electrogenic transport of potassium into the cytoplasm. This subunit acts as a catalytic chaperone that increases the ATP-binding affinity of the ATP-hydrolyzing subunit KdpB by the formation of a transient KdpB/KdpC/ATP ternary complex. This chain is Potassium-transporting ATPase KdpC subunit, found in Geobacter metallireducens (strain ATCC 53774 / DSM 7210 / GS-15).